A 426-amino-acid chain; its full sequence is Putative FBD-associated F-box protein At5g53635 (426 aa).

Positions M1–N45 constitute an F-box domain. Positions M353–H405 constitute an FBD domain.

The chain is Putative FBD-associated F-box protein At5g53635 from Arabidopsis thaliana (Mouse-ear cress).